The primary structure comprises 201 residues: UPF0301 protein MSMEG_6921/MSMEI_6732 (201 aa).

This sequence belongs to the UPF0301 (AlgH) family.

This Mycolicibacterium smegmatis (strain ATCC 700084 / mc(2)155) (Mycobacterium smegmatis) protein is UPF0301 protein MSMEG_6921/MSMEI_6732.